Consider the following 173-residue polypeptide: Putative metal-dependent hydrolase BCE_2729 (173 aa).

The Zn(2+) site is built by His65, His156, and His160.

This sequence belongs to the metal hydrolase YfiT family. Homodimer. It depends on Zn(2+) as a cofactor.

The protein resides in the cytoplasm. Its function is as follows. Possible metal-dependent hydrolase. The sequence is that of Putative metal-dependent hydrolase BCE_2729 from Bacillus cereus (strain ATCC 10987 / NRS 248).